The sequence spans 250 residues: 5-oxoprolinase subunit A (250 aa).

Belongs to the LamB/PxpA family. In terms of assembly, forms a complex composed of PxpA, PxpB and PxpC.

The catalysed reaction is 5-oxo-L-proline + ATP + 2 H2O = L-glutamate + ADP + phosphate + H(+). Catalyzes the cleavage of 5-oxoproline to form L-glutamate coupled to the hydrolysis of ATP to ADP and inorganic phosphate. The polypeptide is 5-oxoprolinase subunit A (Pseudomonas fluorescens (strain ATCC BAA-477 / NRRL B-23932 / Pf-5)).